Reading from the N-terminus, the 339-residue chain is MIFIDACFRKETPYTPIWMMRQAGRYLSEYQESRKKAGSFLELCKNSDLATEVTLQPVEILGVDAAILFSDILVVPLEMGLNLEFIPKKGPHFLETITDLKSVESLKVGAYKQLNYVYDTISQTRQKLSKEKALIGFCGSPWTLATYMIEGEGSKSYAKSKKMLYSEPEVLKALLEKLSLELIEYLSLQIQAGVNAVMIFDSWASALEKEAYLEFSWDYLKKISKELKKRYAHIPVILFPKGIGAYLDSIDGEFDVFGVDWGTPLEVAKKILGDKYVLHGNLEPTRLYDKNALEEGVEKILKVMGNQGHIFNLGHGMLPDLPRENAKYLVQLVHAKTRR.

Residues 21–25 (RQAGR), D71, Y147, S202, and H315 contribute to the substrate site.

This sequence belongs to the uroporphyrinogen decarboxylase family. In terms of assembly, homodimer.

The protein resides in the cytoplasm. It catalyses the reaction uroporphyrinogen III + 4 H(+) = coproporphyrinogen III + 4 CO2. Its pathway is porphyrin-containing compound metabolism; protoporphyrin-IX biosynthesis; coproporphyrinogen-III from 5-aminolevulinate: step 4/4. Its function is as follows. Catalyzes the decarboxylation of four acetate groups of uroporphyrinogen-III to yield coproporphyrinogen-III. The sequence is that of Uroporphyrinogen decarboxylase from Helicobacter pylori (strain P12).